The chain runs to 369 residues: UDP-N-acetylglucosamine--N-acetylmuramyl-(pentapeptide) pyrophosphoryl-undecaprenol N-acetylglucosamine transferase (369 aa).

Residues 10 to 12, Asn-124, Arg-166, Ser-196, and Gln-300 contribute to the UDP-N-acetyl-alpha-D-glucosamine site; that span reads TGG.

The protein belongs to the glycosyltransferase 28 family. MurG subfamily.

The protein localises to the cell membrane. It catalyses the reaction di-trans,octa-cis-undecaprenyl diphospho-N-acetyl-alpha-D-muramoyl-L-alanyl-D-glutamyl-meso-2,6-diaminopimeloyl-D-alanyl-D-alanine + UDP-N-acetyl-alpha-D-glucosamine = di-trans,octa-cis-undecaprenyl diphospho-[N-acetyl-alpha-D-glucosaminyl-(1-&gt;4)]-N-acetyl-alpha-D-muramoyl-L-alanyl-D-glutamyl-meso-2,6-diaminopimeloyl-D-alanyl-D-alanine + UDP + H(+). Its pathway is cell wall biogenesis; peptidoglycan biosynthesis. Its function is as follows. Cell wall formation. Catalyzes the transfer of a GlcNAc subunit on undecaprenyl-pyrophosphoryl-MurNAc-pentapeptide (lipid intermediate I) to form undecaprenyl-pyrophosphoryl-MurNAc-(pentapeptide)GlcNAc (lipid intermediate II). The protein is UDP-N-acetylglucosamine--N-acetylmuramyl-(pentapeptide) pyrophosphoryl-undecaprenol N-acetylglucosamine transferase of Desulfitobacterium hafniense (strain Y51).